Consider the following 376-residue polypeptide: Putative glutamate--cysteine ligase 2-1 (376 aa).

It belongs to the glutamate--cysteine ligase type 2 family. YbdK subfamily.

It carries out the reaction L-cysteine + L-glutamate + ATP = gamma-L-glutamyl-L-cysteine + ADP + phosphate + H(+). Its function is as follows. ATP-dependent carboxylate-amine ligase which exhibits weak glutamate--cysteine ligase activity. This chain is Putative glutamate--cysteine ligase 2-1, found in Rubrobacter xylanophilus (strain DSM 9941 / JCM 11954 / NBRC 16129 / PRD-1).